The chain runs to 187 residues: Dihydrofolate reductase (187 aa).

One can recognise a DHFR domain in the interval 4-185 (PLNCIVAVSQ…IKYKFEVYEK (182 aa)). NADP(+)-binding positions include Ala10 and 16–22 (GIGKNGD). 31–36 (EFKYFQ) contributes to the substrate binding site. Lys33 carries the post-translational modification N6-acetyllysine; alternate. An N6-succinyllysine; alternate modification is found at Lys33. 55-57 (RKT) contacts NADP(+). Residue Arg71 coordinates substrate. NADP(+) is bound by residues 77–79 (SRE) and 117–124 (GGSSVYQE).

The protein belongs to the dihydrofolate reductase family. Homodimer.

The protein localises to the mitochondrion. The protein resides in the cytoplasm. It carries out the reaction (6S)-5,6,7,8-tetrahydrofolate + NADP(+) = 7,8-dihydrofolate + NADPH + H(+). It functions in the pathway cofactor biosynthesis; tetrahydrofolate biosynthesis; 5,6,7,8-tetrahydrofolate from 7,8-dihydrofolate: step 1/1. Key enzyme in folate metabolism. Contributes to the de novo mitochondrial thymidylate biosynthesis pathway. Catalyzes an essential reaction for de novo glycine and purine synthesis, and for DNA precursor synthesis. Binds its own mRNA. The protein is Dihydrofolate reductase (Dhfr) of Rattus norvegicus (Rat).